Here is a 737-residue protein sequence, read N- to C-terminus: Protein bicaudal D homolog (737 aa).

Coiled coils occupy residues 1–255, 292–319, and 547–684; these read MAES…RNAE, GSSDVKVRELEAAKEGLQEELKSREKIF, and AENE…DRDR. The segment at 72–97 is disordered; the sequence is YRSQHQRSTRSELENEESLLEESSAK. Residues 686 to 737 are disordered; sequence VFKRSSTRAPTRETYQPPRAVRYPGSTTTAQQPAPSSSGGSRGGPRRGDNQQ. Residues 710-719 show a composition bias toward polar residues; that stretch reads GSTTTAQQPA.

The protein belongs to the BicD family. As to quaternary structure, component of a dynein-regulating complex composed of at least bicd-1, dlc-1 and egal-1. Interacts with egal-1 and unc-83. In terms of tissue distribution, expressed in the excretory cell, body wall muscles, vulval muscle cells, PVD and FLP sensory neurons and AVF interneurons.

The protein localises to the nucleus envelope. It is found in the perikaryon. It localises to the cell projection. The protein resides in the dendrite. Part of a complex with dlc-1 and egal-1, which is recruited to the nuclear envelope by unc-83, where in turn, it recruits dynein to the nuclear surface and regulates nuclear migration in hypodermal precursor cells. Required for the formation of dendritic branches of PVD sensory neurons. The chain is Protein bicaudal D homolog from Caenorhabditis elegans.